Here is a 1203-residue protein sequence, read N- to C-terminus: DNA-directed RNA polymerase subunit beta' (1203 aa).

4 residues coordinate Zn(2+): Cys60, Cys62, Cys75, and Cys78. Residues Asp449, Asp451, and Asp453 each coordinate Mg(2+). Cys818, Cys892, Cys899, and Cys902 together coordinate Zn(2+).

Belongs to the RNA polymerase beta' chain family. As to quaternary structure, the RNAP catalytic core consists of 2 alpha, 1 beta, 1 beta' and 1 omega subunit. When a sigma factor is associated with the core the holoenzyme is formed, which can initiate transcription. Mg(2+) is required as a cofactor. Zn(2+) serves as cofactor.

The catalysed reaction is RNA(n) + a ribonucleoside 5'-triphosphate = RNA(n+1) + diphosphate. Functionally, DNA-dependent RNA polymerase catalyzes the transcription of DNA into RNA using the four ribonucleoside triphosphates as substrates. This chain is DNA-directed RNA polymerase subunit beta', found in Bacillus cereus (strain ATCC 14579 / DSM 31 / CCUG 7414 / JCM 2152 / NBRC 15305 / NCIMB 9373 / NCTC 2599 / NRRL B-3711).